Here is a 337-residue protein sequence, read N- to C-terminus: Ribosomal RNA small subunit methyltransferase H (337 aa).

Residues 45-47, aspartate 64, histidine 91, aspartate 112, and glutamine 119 contribute to the S-adenosyl-L-methionine site; that span reads GGH.

The protein belongs to the methyltransferase superfamily. RsmH family.

It is found in the cytoplasm. It carries out the reaction cytidine(1402) in 16S rRNA + S-adenosyl-L-methionine = N(4)-methylcytidine(1402) in 16S rRNA + S-adenosyl-L-homocysteine + H(+). In terms of biological role, specifically methylates the N4 position of cytidine in position 1402 (C1402) of 16S rRNA. The polypeptide is Ribosomal RNA small subunit methyltransferase H (Cutibacterium acnes (strain DSM 16379 / KPA171202) (Propionibacterium acnes)).